Consider the following 365-residue polypeptide: Guanine nucleotide-binding protein alpha-6 subunit (365 aa).

G2 is lipidated: N-myristoyl glycine. Residues 42-364 (NRFKILLLGT…NENLRSAGLH (323 aa)) form the G-alpha domain. The interval 45–58 (KILLLGTAESGKST) is G1 motif. GTP is bound by residues 50–57 (GTAESGKS), 187–193 (VHCRIST), 212–216 (DVGGQ), 281–284 (NKYD), and A336. 2 residues coordinate Mg(2+): S57 and T193. Residues 185–193 (DIVHCRIST) are G2 motif. The tract at residues 208-217 (FKMVDVGGQR) is G3 motif. The tract at residues 277–284 (VLFLNKYD) is G4 motif. Residues 334–339 (TTATDT) are G5 motif.

Belongs to the G-alpha family. As to quaternary structure, g proteins are composed of 3 units; alpha, beta and gamma. The alpha chain contains the guanine nucleotide binding site.

Its function is as follows. Guanine nucleotide-binding proteins (G proteins) are involved as modulators or transducers in various transmembrane signaling systems. This is Guanine nucleotide-binding protein alpha-6 subunit (gpa-6) from Caenorhabditis briggsae.